A 437-amino-acid polypeptide reads, in one-letter code: Acyl-coenzyme A thioesterase 9, mitochondrial (437 aa).

A mitochondrion-targeting transit peptide spans 1–21; sequence MRRAALRLCTLSKGLLAPSRG. 2 HotDog ACOT-type domains span residues 84 to 207 and 287 to 399; these read SYIE…RDSE and ENSK…EKEV. At Lys-101 the chain carries N6-acetyllysine.

The protein belongs to the acyl coenzyme A hydrolase family. In terms of assembly, interacts with NYAP1, NYAP2 and MYO16.

It is found in the mitochondrion. The protein localises to the mitochondrion matrix. It localises to the mitochondrion inner membrane. It carries out the reaction butanoyl-CoA + H2O = butanoate + CoA + H(+). It catalyses the reaction propanoyl-CoA + H2O = propanoate + CoA + H(+). The enzyme catalyses hexadecanoyl-CoA + H2O = hexadecanoate + CoA + H(+). The catalysed reaction is octanoyl-CoA + H2O = octanoate + CoA + H(+). It carries out the reaction decanoyl-CoA + H2O = decanoate + CoA + H(+). It catalyses the reaction tetradecanoyl-CoA + H2O = tetradecanoate + CoA + H(+). The enzyme catalyses 4,8-dimethylnonanoyl-CoA + H2O = 4,8-dimethylnonanoate + CoA + H(+). The catalysed reaction is 3-methylbutanoyl-CoA + H2O = 3-methylbutanoate + CoA + H(+). It carries out the reaction 2-methylpropanoyl-CoA + H2O = 2-methylpropanoate + CoA + H(+). It participates in lipid metabolism; fatty acid metabolism. Its activity is regulated as follows. Strongly inhibited by NADH and CoA. Its function is as follows. Mitochondrial acyl-CoA thioesterase. Catalyzes the hydrolysis of acyl-CoAs into free fatty acids and coenzyme A (CoA), regulating their respective intracellular levels. Regulates both mitochondrial lipid and amino acid metabolism. In Bos taurus (Bovine), this protein is Acyl-coenzyme A thioesterase 9, mitochondrial (ACOT9).